The following is a 269-amino-acid chain: Imidazole glycerol phosphate synthase subunit HisF (269 aa).

Catalysis depends on residues aspartate 23 and aspartate 142.

It belongs to the HisA/HisF family. As to quaternary structure, heterodimer of HisH and HisF.

It is found in the cytoplasm. It catalyses the reaction 5-[(5-phospho-1-deoxy-D-ribulos-1-ylimino)methylamino]-1-(5-phospho-beta-D-ribosyl)imidazole-4-carboxamide + L-glutamine = D-erythro-1-(imidazol-4-yl)glycerol 3-phosphate + 5-amino-1-(5-phospho-beta-D-ribosyl)imidazole-4-carboxamide + L-glutamate + H(+). Its pathway is amino-acid biosynthesis; L-histidine biosynthesis; L-histidine from 5-phospho-alpha-D-ribose 1-diphosphate: step 5/9. Its function is as follows. IGPS catalyzes the conversion of PRFAR and glutamine to IGP, AICAR and glutamate. The HisF subunit catalyzes the cyclization activity that produces IGP and AICAR from PRFAR using the ammonia provided by the HisH subunit. This chain is Imidazole glycerol phosphate synthase subunit HisF, found in Bordetella pertussis (strain Tohama I / ATCC BAA-589 / NCTC 13251).